Here is a 206-residue protein sequence, read N- to C-terminus: MAEEAYEYLVPLEKYLSAGVRLGTRLSNRYLEERGFIFAVRPDGLRIFDIKKIDERLKIAAKFIARYPPDRVLVHTTRPYGFKPVQMFCKFVGCRALTGRFIPGTLTNPNLPHYQEVDLLFVVDPKLDAQAVTEAAKMGIPVVALVDTDTPHQYIDLMVPCNNKGRKSLALIFWILARQILRERGELKPDQDLPVPPEEFETRLVQ.

This sequence belongs to the universal ribosomal protein uS2 family.

This is Small ribosomal subunit protein uS2 from Pyrobaculum neutrophilum (strain DSM 2338 / JCM 9278 / NBRC 100436 / V24Sta) (Thermoproteus neutrophilus).